We begin with the raw amino-acid sequence, 348 residues long: S-adenosylmethionine:tRNA ribosyltransferase-isomerase (348 aa).

It belongs to the QueA family. Monomer.

The protein resides in the cytoplasm. The catalysed reaction is 7-aminomethyl-7-carbaguanosine(34) in tRNA + S-adenosyl-L-methionine = epoxyqueuosine(34) in tRNA + adenine + L-methionine + 2 H(+). It functions in the pathway tRNA modification; tRNA-queuosine biosynthesis. Transfers and isomerizes the ribose moiety from AdoMet to the 7-aminomethyl group of 7-deazaguanine (preQ1-tRNA) to give epoxyqueuosine (oQ-tRNA). The chain is S-adenosylmethionine:tRNA ribosyltransferase-isomerase from Alteromonas mediterranea (strain DSM 17117 / CIP 110805 / LMG 28347 / Deep ecotype).